Reading from the N-terminus, the 154-residue chain is AP-1 complex subunit sigma-2 (154 aa).

The protein belongs to the adaptor complexes small subunit family. Adaptor protein complex 1 (AP-1) is a heterotetramer composed of two large adaptins (gamma-type subunit and beta-type subunit), a medium adaptin (mu-type subunit) and a small adaptin (sigma-type subunit).

The protein resides in the golgi apparatus. The protein localises to the trans-Golgi network. It is found in the cytoplasmic vesicle. It localises to the clathrin-coated vesicle membrane. Its function is as follows. Subunit of clathrin-associated adaptor protein complex 1 that plays a role in protein sorting in the trans-Golgi network (TGN) and endosomes. The AP complexes mediate the recruitment of clathrin to membranes and the recognition of sorting signals within the cytosolic tails of transmembrane cargo molecules. Also involved in early steps of phagocytosis and macropinocytosis. In Dictyostelium discoideum (Social amoeba), this protein is AP-1 complex subunit sigma-2 (ap1s2).